The sequence spans 308 residues: uncharacterized protein (308 aa).

This is an uncharacterized protein from Ictalurid herpesvirus 1 (strain Auburn) (IcHV-1).